The chain runs to 207 residues: MGMLEARELLCERDERTLFSGLSFTLNAGEWVQITGSNGAGKTTLLRLLTGLSRPDAGEVLWQGQPLHQVRDSYHQNLLWIGHQPGIKTRLTALENLHFYHRDGDTAQCLEALAQAGLAGFEDIPVNQLSAGQQRRVALARLWLTRATLWILDEPFTAIDVNGVDRLTQRMAQHTEQGGIVILTTHQPLNVAESKIRRISLTQTGAA.

The region spanning 4–207 (LEARELLCER…RISLTQTGAA (204 aa)) is the ABC transporter domain. Residue 36-43 (GSNGAGKT) coordinates ATP.

It belongs to the ABC transporter superfamily. CcmA exporter (TC 3.A.1.107) family. In terms of assembly, the complex is composed of two ATP-binding proteins (CcmA) and two transmembrane proteins (CcmB).

The protein resides in the cell inner membrane. The enzyme catalyses heme b(in) + ATP + H2O = heme b(out) + ADP + phosphate + H(+). Functionally, part of the ABC transporter complex CcmAB involved in the biogenesis of c-type cytochromes; once thought to export heme, this seems not to be the case, but its exact role is uncertain. Responsible for energy coupling to the transport system. In Escherichia coli (strain UTI89 / UPEC), this protein is Cytochrome c biogenesis ATP-binding export protein CcmA.